The primary structure comprises 314 residues: L-lactate dehydrogenase 2 (314 aa).

NAD(+) is bound by residues Val16, Asp37, Lys42, Tyr68, and 82 to 83 (GL). Substrate is bound by residues Gln85, Arg91, and 123 to 126 (NPVD). Residues 121-123 (ATN) and Ser146 contribute to the NAD(+) site. 151-154 (DSAR) serves as a coordination point for substrate. Arg156 and His171 together coordinate beta-D-fructose 1,6-bisphosphate. His178 serves as the catalytic Proton acceptor. Tyr223 bears the Phosphotyrosine mark. Thr232 is a binding site for substrate.

It belongs to the LDH/MDH superfamily. LDH family. As to quaternary structure, homotetramer.

It is found in the cytoplasm. The enzyme catalyses (S)-lactate + NAD(+) = pyruvate + NADH + H(+). It participates in fermentation; pyruvate fermentation to lactate; (S)-lactate from pyruvate: step 1/1. With respect to regulation, allosterically activated by fructose 1,6-bisphosphate (FBP). In terms of biological role, catalyzes the conversion of lactate to pyruvate. This Bacillus cereus (strain ATCC 10987 / NRS 248) protein is L-lactate dehydrogenase 2.